Reading from the N-terminus, the 292-residue chain is Elongation factor Ts (292 aa).

Positions 81–84 (TDFV) are involved in Mg(2+) ion dislocation from EF-Tu.

Belongs to the EF-Ts family.

The protein resides in the cytoplasm. Its function is as follows. Associates with the EF-Tu.GDP complex and induces the exchange of GDP to GTP. It remains bound to the aminoacyl-tRNA.EF-Tu.GTP complex up to the GTP hydrolysis stage on the ribosome. The polypeptide is Elongation factor Ts (Alkalilimnicola ehrlichii (strain ATCC BAA-1101 / DSM 17681 / MLHE-1)).